Reading from the N-terminus, the 473-residue chain is Gamma-aminobutyric acid receptor subunit beta-3 (473 aa).

Positions 1–25 (MWGLAGGRLFGIFSAPVLVAVVCCA) are cleaved as a signal peptide. Topologically, residues 26–246 (QSVNDPGNMS…FRLKRNIGYF (221 aa)) are extracellular. N-linked (GlcNAc...) asparagine glycans are attached at residues asparagine 33 and asparagine 105. Residue 120 to 122 (DTY) participates in benzamidine binding. Residue tyrosine 122 participates in 4-aminobutanoate binding. Histamine is bound at residue tyrosine 122. Cysteine 161 and cysteine 175 are disulfide-bonded. Residue asparagine 174 is glycosylated (N-linked (GlcNAc...) asparagine). Glutamate 180 and tyrosine 182 together coordinate 4-aminobutanoate. Benzamidine-binding positions include 180–182 (ESY) and phenylalanine 225. 181–182 (SY) is a histamine binding site. Threonine 227 provides a ligand contact to 4-aminobutanoate. Threonine 227 contributes to the histamine binding site. The helical transmembrane segment at 247 to 267 (ILQTYMPSILITILSWVSFWI) threads the bilayer. Residues 268 to 271 (NYDA) lie on the Cytoplasmic side of the membrane. The chain crosses the membrane as a helical span at residues 272–292 (SAARVALGITTVLTMTTINTH). The Extracellular portion of the chain corresponds to 293-304 (LRETLPKIPYVK). Residues 305 to 328 (AIDMYLMGCFVFVFLALLEYAFVN) form a helical membrane-spanning segment. Over 329–447 (YIFFGRGPQR…KIPDLTDVNA (119 aa)) the chain is Cytoplasmic. A helical transmembrane segment spans residues 448-470 (IDRWSRIVFPFTFSLFNLVYWLY). Topologically, residues 471–473 (YVN) are extracellular.

Belongs to the ligand-gated ion channel (TC 1.A.9) family. Gamma-aminobutyric acid receptor (TC 1.A.9.5) subfamily. GABRB3 sub-subfamily. Heteropentamer, formed by a combination of alpha (GABRA1-6), beta (GABRB1-3), gamma (GABRG1-3), delta (GABRD), epsilon (GABRE), rho (GABRR1-3), pi (GABRP) and theta (GABRQ) chains, each subunit exhibiting distinct physiological and pharmacological properties. Can form functional homopentamers (in vitro). Interacts with UBQLN1. May interact with KIF21B. Identified in a complex of 720 kDa composed of LHFPL4, NLGN2, GABRA1, GABRB2, GABRG2 and GABRB3. Interacts with LHFPL4. Interacts with GIT1; this interaction is required for synaptic GABRB3 surface stability and inhibitory synapse strength.

The protein localises to the postsynaptic cell membrane. Its subcellular location is the cell membrane. It is found in the cytoplasmic vesicle membrane. It catalyses the reaction chloride(in) = chloride(out). Potentiated by histamine. Beta subunit of the heteropentameric ligand-gated chloride channel gated by gamma-aminobutyric acid (GABA), a major inhibitory neurotransmitter in the brain. GABA-gated chloride channels, also named GABA(A) receptors (GABAAR), consist of five subunits arranged around a central pore and contain GABA active binding site(s) located at the alpha and beta subunit interface(s). GABAARs containing beta-3/GABRB3 subunit are found at both synaptic and extrasynaptic sites. When activated by GABA, GABAARs selectively allow the flow of chloride anions across the cell membrane down their electrochemical gradient. Chloride influx into the postsynaptic neuron following GABAAR opening decreases the neuron ability to generate a new action potential, thereby reducing nerve transmission. GABAARs containing alpha-1 and beta-3 subunits exhibit synaptogenic activity; the gamma-2 subunit being necessary but not sufficient to induce rapid synaptic contacts formation. Extrasynaptic beta-3 receptors contribute to the tonic GABAergic inhibition. GABAARs containing alpha-1, beta-3 and epsilon subunits may also permit spontaneous chloride channel activity while preserving the structural information required for GABA-gated openings. Beta-containing GABAARs can simultaneously bind GABA and histamine where histamine binds at the interface of two neighboring beta subunits, which may be involved in the regulation of sleep and wakefulness. Plays an important role in somatosensation and in the production of antinociception. The chain is Gamma-aminobutyric acid receptor subunit beta-3 from Homo sapiens (Human).